Here is an 89-residue protein sequence, read N- to C-terminus: Small ribosomal subunit protein uS15 (89 aa).

Belongs to the universal ribosomal protein uS15 family. In terms of assembly, part of the 30S ribosomal subunit. Forms a bridge to the 50S subunit in the 70S ribosome, contacting the 23S rRNA.

In terms of biological role, one of the primary rRNA binding proteins, it binds directly to 16S rRNA where it helps nucleate assembly of the platform of the 30S subunit by binding and bridging several RNA helices of the 16S rRNA. Its function is as follows. Forms an intersubunit bridge (bridge B4) with the 23S rRNA of the 50S subunit in the ribosome. The protein is Small ribosomal subunit protein uS15 of Nitrosococcus oceani (strain ATCC 19707 / BCRC 17464 / JCM 30415 / NCIMB 11848 / C-107).